Reading from the N-terminus, the 90-residue chain is Small ribosomal subunit protein uS15c (90 aa).

It belongs to the universal ribosomal protein uS15 family. Part of the 30S ribosomal subunit.

It localises to the plastid. It is found in the chloroplast. This chain is Small ribosomal subunit protein uS15c (rps15), found in Acorus calamus (Sweet flag).